A 313-amino-acid polypeptide reads, in one-letter code: Thymidylate synthase (313 aa).

The interval 1–28 (MPVAGSELPRRPLPPAAQERDAEPRPPH) is disordered. Residues 18 to 28 (QERDAEPRPPH) show a composition bias toward basic and acidic residues. Arg-50 is a binding site for dUMP. Ser-114 carries the phosphoserine modification. Residues 175 to 176 (RR), 195 to 196 (CH), 215 to 218 (RSGD), Asn-226, and 256 to 258 (HIY) each bind dUMP. The active-site Nucleophile is the Cys-195. Position 218 (Asp-218) interacts with (6R)-5,10-methylene-5,6,7,8-tetrahydrofolate. Glycyl lysine isopeptide (Lys-Gly) (interchain with G-Cter in SUMO2) cross-links involve residues Lys-287, Lys-292, and Lys-308. A (6R)-5,10-methylene-5,6,7,8-tetrahydrofolate-binding site is contributed by Ala-312.

Belongs to the thymidylate synthase family. In terms of assembly, homodimer.

It is found in the nucleus. Its subcellular location is the cytoplasm. It localises to the mitochondrion. The protein localises to the mitochondrion matrix. The protein resides in the mitochondrion inner membrane. The enzyme catalyses dUMP + (6R)-5,10-methylene-5,6,7,8-tetrahydrofolate = 7,8-dihydrofolate + dTMP. The protein operates within pyrimidine metabolism; dTTP biosynthesis. Functionally, catalyzes the reductive methylation of 2'-deoxyuridine 5'-monophosphate (dUMP) to thymidine 5'-monophosphate (dTMP), using the cosubstrate, 5,10- methylenetetrahydrofolate (CH2H4folate) as a 1-carbon donor and reductant and contributes to the de novo mitochondrial thymidylate biosynthesis pathway. The polypeptide is Thymidylate synthase (Homo sapiens (Human)).